The primary structure comprises 390 residues: S-adenosylmethionine synthase 2 (390 aa).

Residue Glu-9 participates in Mg(2+) binding. His-15 contacts ATP. Glu-43 serves as a coordination point for K(+). Glu-56 and Gln-99 together coordinate L-methionine. ATP contacts are provided by residues 167–169, 235–238, Asp-246, 252–253, Ala-269, Lys-273, and Lys-277; these read DGK, SGRF, and RK. Residue Asp-246 participates in L-methionine binding. Lys-277 contacts L-methionine.

Belongs to the AdoMet synthase family. Homotetramer. It depends on Mn(2+) as a cofactor. The cofactor is Mg(2+). Co(2+) is required as a cofactor. Requires K(+) as cofactor.

The protein resides in the cytoplasm. It carries out the reaction L-methionine + ATP + H2O = S-adenosyl-L-methionine + phosphate + diphosphate. Its pathway is amino-acid biosynthesis; S-adenosyl-L-methionine biosynthesis; S-adenosyl-L-methionine from L-methionine: step 1/1. In terms of biological role, catalyzes the formation of S-adenosylmethionine from methionine and ATP. The reaction comprises two steps that are both catalyzed by the same enzyme: formation of S-adenosylmethionine (AdoMet) and triphosphate, and subsequent hydrolysis of the triphosphate. This chain is S-adenosylmethionine synthase 2 (SAM2), found in Actinidia chinensis var. chinensis (Chinese soft-hair kiwi).